The chain runs to 89 residues: Small ribosomal subunit protein uS15 (89 aa).

This sequence belongs to the universal ribosomal protein uS15 family. As to quaternary structure, part of the 30S ribosomal subunit. Forms a bridge to the 50S subunit in the 70S ribosome, contacting the 23S rRNA.

Functionally, one of the primary rRNA binding proteins, it binds directly to 16S rRNA where it helps nucleate assembly of the platform of the 30S subunit by binding and bridging several RNA helices of the 16S rRNA. In terms of biological role, forms an intersubunit bridge (bridge B4) with the 23S rRNA of the 50S subunit in the ribosome. The sequence is that of Small ribosomal subunit protein uS15 from Mannheimia succiniciproducens (strain KCTC 0769BP / MBEL55E).